The following is a 474-amino-acid chain: tRNA-2-methylthio-N(6)-dimethylallyladenosine synthase (474 aa).

Residues 3-120 (KKLLIKTWGC…LPEMIRQSQS (118 aa)) form the MTTase N-terminal domain. [4Fe-4S] cluster-binding residues include C12, C49, C83, C157, C161, and C164. The 233-residue stretch at 143–375 (KAEGATAFVS…QQQVNSQAMR (233 aa)) folds into the Radical SAM core domain. The TRAM domain maps to 378–441 (RLMLDTEQRV…ANSLRGELVR (64 aa)).

The protein belongs to the methylthiotransferase family. MiaB subfamily. In terms of assembly, monomer. The cofactor is [4Fe-4S] cluster.

It is found in the cytoplasm. The catalysed reaction is N(6)-dimethylallyladenosine(37) in tRNA + (sulfur carrier)-SH + AH2 + 2 S-adenosyl-L-methionine = 2-methylsulfanyl-N(6)-dimethylallyladenosine(37) in tRNA + (sulfur carrier)-H + 5'-deoxyadenosine + L-methionine + A + S-adenosyl-L-homocysteine + 2 H(+). In terms of biological role, catalyzes the methylthiolation of N6-(dimethylallyl)adenosine (i(6)A), leading to the formation of 2-methylthio-N6-(dimethylallyl)adenosine (ms(2)i(6)A) at position 37 in tRNAs that read codons beginning with uridine. The protein is tRNA-2-methylthio-N(6)-dimethylallyladenosine synthase of Aliivibrio fischeri (strain ATCC 700601 / ES114) (Vibrio fischeri).